Here is a 177-residue protein sequence, read N- to C-terminus: Isopentenyl-diphosphate Delta-isomerase 2 (177 aa).

The Mn(2+) site is built by His-24 and His-30. The Nudix hydrolase domain occupies 28–160; that stretch reads MLHRAFSIFV…PDVYTVWFKK (133 aa). Residue Cys-65 is part of the active site. Cys-65 contributes to the Mg(2+) binding site. Position 67 (His-67) interacts with Mn(2+). Glu-85 lines the Mg(2+) pocket. 2 residues coordinate Mn(2+): Glu-110 and Glu-112. The active site involves Glu-112.

This sequence belongs to the IPP isomerase type 1 family. Homodimer. The cofactor is Mg(2+). Mn(2+) is required as a cofactor.

The protein resides in the cytoplasm. The enzyme catalyses isopentenyl diphosphate = dimethylallyl diphosphate. It participates in isoprenoid biosynthesis; dimethylallyl diphosphate biosynthesis; dimethylallyl diphosphate from isopentenyl diphosphate: step 1/1. Catalyzes the 1,3-allylic rearrangement of the homoallylic substrate isopentenyl (IPP) to its highly electrophilic allylic isomer, dimethylallyl diphosphate (DMAPP). The chain is Isopentenyl-diphosphate Delta-isomerase 2 from Photorhabdus laumondii subsp. laumondii (strain DSM 15139 / CIP 105565 / TT01) (Photorhabdus luminescens subsp. laumondii).